A 221-amino-acid chain; its full sequence is Octanoyltransferase (221 aa).

The BPL/LPL catalytic domain maps to 35–221 (ESYENRIIFC…RELLAALLSK (187 aa)). Substrate is bound by residues 80-87 (RGGDITYH), 152-154 (AIG), and 165-167 (GLA). Catalysis depends on C183, which acts as the Acyl-thioester intermediate.

It belongs to the LipB family.

The protein resides in the cytoplasm. The catalysed reaction is octanoyl-[ACP] + L-lysyl-[protein] = N(6)-octanoyl-L-lysyl-[protein] + holo-[ACP] + H(+). It participates in protein modification; protein lipoylation via endogenous pathway; protein N(6)-(lipoyl)lysine from octanoyl-[acyl-carrier-protein]: step 1/2. Functionally, catalyzes the transfer of endogenously produced octanoic acid from octanoyl-acyl-carrier-protein onto the lipoyl domains of lipoate-dependent enzymes. Lipoyl-ACP can also act as a substrate although octanoyl-ACP is likely to be the physiological substrate. The chain is Octanoyltransferase from Bacteroides fragilis (strain ATCC 25285 / DSM 2151 / CCUG 4856 / JCM 11019 / LMG 10263 / NCTC 9343 / Onslow / VPI 2553 / EN-2).